The following is a 391-amino-acid chain: DNA primase small subunit PriS (391 aa).

Active-site residues include Asp-98, Asp-100, and Asp-294.

The protein belongs to the eukaryotic-type primase small subunit family. As to quaternary structure, heterodimer of a small subunit (PriS) and a large subunit (PriL). The cofactor is Mg(2+). Mn(2+) is required as a cofactor.

In terms of biological role, catalytic subunit of DNA primase, an RNA polymerase that catalyzes the synthesis of short RNA molecules used as primers for DNA polymerase during DNA replication. The small subunit contains the primase catalytic core and has DNA synthesis activity on its own. Binding to the large subunit stabilizes and modulates the activity, increasing the rate of DNA synthesis while decreasing the length of the DNA fragments, and conferring RNA synthesis capability. The DNA polymerase activity may enable DNA primase to also catalyze primer extension after primer synthesis. May also play a role in DNA repair. In Halobacterium salinarum (strain ATCC 29341 / DSM 671 / R1), this protein is DNA primase small subunit PriS.